A 515-amino-acid polypeptide reads, in one-letter code: FAD-dependent oxidoreductase domain-containing protein 1 homolog (515 aa).

The tract at residues 18–37 (AGATSNGSGSSGGDKSGEDL) is disordered. The chain crosses the membrane as a helical span at residues 100–116 (VLIIGGGGVGSSIAYWL).

As to quaternary structure, associates with mitochondrial complex I assembly intermediates during its biogenesis. It depends on FAD as a cofactor.

It is found in the mitochondrion inner membrane. Functionally, involved in the assembly of the mitochondrial membrane respiratory chain NADH dehydrogenase (Complex I). The protein is FAD-dependent oxidoreductase domain-containing protein 1 homolog of Drosophila melanogaster (Fruit fly).